Consider the following 182-residue polypeptide: Large ribosomal subunit protein uL10 (182 aa).

This sequence belongs to the universal ribosomal protein uL10 family. As to quaternary structure, part of the ribosomal stalk of the 50S ribosomal subunit. The N-terminus interacts with L11 and the large rRNA to form the base of the stalk. The C-terminus forms an elongated spine to which L12 dimers bind in a sequential fashion forming a multimeric L10(L12)X complex.

Its function is as follows. Forms part of the ribosomal stalk, playing a central role in the interaction of the ribosome with GTP-bound translation factors. The sequence is that of Large ribosomal subunit protein uL10 from Chloroflexus aurantiacus (strain ATCC 29364 / DSM 637 / Y-400-fl).